Reading from the N-terminus, the 1050-residue chain is Sentrin-specific protease 7 (1050 aa).

3 disordered regions span residues 1 to 28 (MDKR…SSDL), 183 to 288 (PPVT…DVKY), and 304 to 365 (RRLR…KSDF). Phosphoserine occurs at positions 11, 12, 13, and 25. Residues 196 to 211 (LQSEQLSSSSDGSLES) are compositionally biased toward low complexity. Residues 259-271 (ISDTQPEDLNSGS) are compositionally biased toward polar residues. Residues 273 to 288 (GCDHLEQESRNKDVKY) show a composition bias toward basic and acidic residues. A compositionally biased stretch (polar residues) spans 310–320 (LPDSQYCTSLD). Composition is skewed to basic and acidic residues over residues 321-331 (KSTEQTKKQED) and 338-365 (EFEK…KSDF). Residues Ser-373, Ser-433, Ser-443, and Ser-444 each carry the phosphoserine modification. The disordered stretch occupies residues 443–476 (SSDEEGPVEHKSSEILKLQSKQDRETTNENESTS). Basic and acidic residues predominate over residues 449 to 469 (PVEHKSSEILKLQSKQDRETT). A protease region spans residues 760 to 1050 (LGVTNEDLEC…HLQQQKGSSS (291 aa)). Catalysis depends on residues His-860 and Asp-939. Catalysis depends on Cys-992, which acts as the Nucleophile.

This sequence belongs to the peptidase C48 family.

The protein localises to the cytoplasm. In terms of biological role, protease that acts as a positive regulator of the cGAS-STING pathway by catalyzing desumoylation of CGAS. Desumoylation of CGAS promotes DNA-binding activity of CGAS, subsequent oligomerization and activation. Deconjugates SUMO2 and SUMO3 from targeted proteins, but not SUMO1. Catalyzes the deconjugation of poly-SUMO2 and poly-SUMO3 chains. Has very low efficiency in processing full-length SUMO proteins to their mature forms. This Homo sapiens (Human) protein is Sentrin-specific protease 7.